We begin with the raw amino-acid sequence, 398 residues long: Lysophospholipid acyltransferase LPEAT1 (398 aa).

Residues 1 to 24 (MESELKDLNSNSNPPSSKEDRPLL) are disordered. The residue at position 28 (Ser-28) is a Phosphoserine. A helical transmembrane segment spans residues 66–86 (LAVALVTLVPLRFLLSMSILL). The disordered stretch occupies residues 158-185 (RDSDMDSNPKTTSTEINQKGEAATEEPE). Over residues 163 to 174 (DSNPKTTSTEIN) the composition is skewed to polar residues. The HXXXXD motif signature appears at 194 to 199 (HVSYLD).

Belongs to the 1-acyl-sn-glycerol-3-phosphate acyltransferase family.

The protein resides in the endoplasmic reticulum membrane. It catalyses the reaction a 1-acyl-sn-glycero-3-phosphoethanolamine + an acyl-CoA = a 1,2-diacyl-sn-glycero-3-phosphoethanolamine + CoA. It carries out the reaction a 1-acyl-sn-glycero-3-phosphate + an acyl-CoA = a 1,2-diacyl-sn-glycero-3-phosphate + CoA. The catalysed reaction is a 1-acyl-sn-glycero-3-phosphocholine + an acyl-CoA = a 1,2-diacyl-sn-glycero-3-phosphocholine + CoA. The enzyme catalyses a 1-acyl-sn-glycero-3-phospho-L-serine + an acyl-CoA = a 1,2-diacyl-sn-glycero-3-phospho-L-serine + CoA. It participates in lipid metabolism; phospholipid metabolism. Possesses acyl-CoA-dependent lysophospholipid acyltransferase activity with a subset of lysophospholipids as substrates. Exhibits strong acylation activity on lysophosphatidylethanolamine (LPE) and lysophosphatidate (LPA), and lower activity on lysophosphatidylcholine (LPC) and lysophosphatidylserine (LPS). Exhibits acylation activity on both LPE and LPC. Has a preference for 18:1-LPE over 16:0-LPE as acceptor. Palmitoyl-CoA (16:0-CoA) is a better acyl donor than oleoyl-CoA (18:1-CoA). Among several different acyl-CoA species the best acyl donor is palmitoyl-CoA (16:0-CoA). Activity is calcium-independent. Its activity is essential for maintaining adequate levels of phosphatidylethanolamine (PE), LPE and LPC in the cells, which is crucial for plant growth regulation. This Arabidopsis thaliana (Mouse-ear cress) protein is Lysophospholipid acyltransferase LPEAT1.